A 90-amino-acid chain; its full sequence is Protein AF1q (90 aa).

Residues leucine 24 to leucine 32 carry the Nuclear export signal motif. Serine 84 is subject to Phosphoserine.

It belongs to the MLLT11 family. Interacts with HSPA8 and LAMP2 isoform A; the interaction may target MLLT11 for degradation via chaperone-mediated autophagy. Interacts with TCF7. Post-translationally, ubiquitinated, leading to degradation.

It is found in the nucleus. The protein resides in the cytoplasm. It localises to the cytoskeleton. Its subcellular location is the microtubule organizing center. The protein localises to the centrosome. In terms of biological role, cofactor for the transcription factor TCF7. Involved in regulation of lymphoid development by driving multipotent hematopoietic progenitor cells towards a T-cell fate. In Pongo abelii (Sumatran orangutan), this protein is Protein AF1q (MLLT11).